The sequence spans 232 residues: Ribonuclease 3 (232 aa).

The region spanning 9 to 131 (INLLQKKLGY…IIGGIFLDSN (123 aa)) is the RNase III domain. Glu-44 lines the Mg(2+) pocket. Asp-48 is an active-site residue. Positions 117 and 120 each coordinate Mg(2+). Glu-120 is a catalytic residue. Residues 158–228 (DPKTRLQEYL…AENALKFLIE (71 aa)) form the DRBM domain.

This sequence belongs to the ribonuclease III family. In terms of assembly, homodimer. The cofactor is Mg(2+).

The protein localises to the cytoplasm. It catalyses the reaction Endonucleolytic cleavage to 5'-phosphomonoester.. Its function is as follows. Digests double-stranded RNA. Involved in the processing of primary rRNA transcript to yield the immediate precursors to the large and small rRNAs (23S and 16S). Processes some mRNAs, and tRNAs when they are encoded in the rRNA operon. Processes pre-crRNA and tracrRNA of type II CRISPR loci if present in the organism. This is Ribonuclease 3 from Blochmanniella floridana.